The chain runs to 423 residues: Pre-mRNA-splicing regulator WTAP (423 aa).

Residues 234–423 (QQLSQMNQTQ…TSNASAGSVL (190 aa)) form a disordered region. Polar residues-rich tracts occupy residues 239 to 276 (MNQTQGTSSGAGPSRTSPSTASEPSTQSEPANASSSNV), 285 to 301 (NGPSNGNSSQRGASGSS), 358 to 377 (DSPTGSETSVTQHSNDTDSN), and 392 to 404 (TAGTRHSTQNGLD). Residues 405-423 (SSAAAVATNTSNASAGSVL) are compositionally biased toward low complexity.

It belongs to the fl(2)d family. Component of the WMM complex, a N6-methyltransferase complex composed of a catalytic subcomplex, named MAC, and of an associated subcomplex, named MACOM. Component of the MACOM subcomplex.

It is found in the nucleus speckle. The protein localises to the nucleus. The protein resides in the nucleoplasm. Associated component of the WMM complex, a complex that mediates N6-methyladenosine (m6A) methylation of RNAs, a modification that plays a role in the efficiency of mRNA splicing and RNA processing. This chain is Pre-mRNA-splicing regulator WTAP, found in Danio rerio (Zebrafish).